Here is a 623-residue protein sequence, read N- to C-terminus: DNA-directed RNA polymerase subunit beta' (623 aa).

Cys-70, Cys-72, Cys-85, and Cys-88 together coordinate Zn(2+). Residues Asp-466, Asp-468, and Asp-470 each coordinate Mg(2+).

The protein belongs to the RNA polymerase beta' chain family. RpoC1 subfamily. In plastids the minimal PEP RNA polymerase catalytic core is composed of four subunits: alpha, beta, beta', and beta''. When a (nuclear-encoded) sigma factor is associated with the core the holoenzyme is formed, which can initiate transcription. Mg(2+) is required as a cofactor. Requires Zn(2+) as cofactor.

Its subcellular location is the plastid. The protein localises to the chloroplast. The catalysed reaction is RNA(n) + a ribonucleoside 5'-triphosphate = RNA(n+1) + diphosphate. In terms of biological role, DNA-dependent RNA polymerase catalyzes the transcription of DNA into RNA using the four ribonucleoside triphosphates as substrates. This is DNA-directed RNA polymerase subunit beta' from Rhodomonas salina (Cryptomonas salina).